Reading from the N-terminus, the 589-residue chain is Proline--tRNA ligase (589 aa).

The protein belongs to the class-II aminoacyl-tRNA synthetase family. ProS type 1 subfamily. As to quaternary structure, homodimer.

The protein localises to the cytoplasm. It catalyses the reaction tRNA(Pro) + L-proline + ATP = L-prolyl-tRNA(Pro) + AMP + diphosphate. Its function is as follows. Catalyzes the attachment of proline to tRNA(Pro) in a two-step reaction: proline is first activated by ATP to form Pro-AMP and then transferred to the acceptor end of tRNA(Pro). As ProRS can inadvertently accommodate and process non-cognate amino acids such as alanine and cysteine, to avoid such errors it has two additional distinct editing activities against alanine. One activity is designated as 'pretransfer' editing and involves the tRNA(Pro)-independent hydrolysis of activated Ala-AMP. The other activity is designated 'posttransfer' editing and involves deacylation of mischarged Ala-tRNA(Pro). The misacylated Cys-tRNA(Pro) is not edited by ProRS. The polypeptide is Proline--tRNA ligase (Corynebacterium aurimucosum (strain ATCC 700975 / DSM 44827 / CIP 107346 / CN-1) (Corynebacterium nigricans)).